The following is a 94-amino-acid chain: Large ribosomal subunit protein bL28 (94 aa).

The disordered stretch occupies residues 1–21; it reads MARRCEVTGRGTVSGNNVSHS. The segment covering 11–20 has biased composition (polar residues); it reads GTVSGNNVSH.

This sequence belongs to the bacterial ribosomal protein bL28 family.

This Leptospira borgpetersenii serovar Hardjo-bovis (strain JB197) protein is Large ribosomal subunit protein bL28.